The primary structure comprises 528 residues: Chaperonin GroEL, chloroplastic (528 aa).

ATP contacts are provided by residues 29–32 (TLGP), 86–90 (DGTTT), glycine 414, and aspartate 496.

The protein belongs to the chaperonin (HSP60) family. As to quaternary structure, forms a cylinder of 14 subunits composed of two heptameric rings stacked back-to-back. Interacts with the co-chaperonin GroES.

It localises to the plastid. The protein localises to the chloroplast. The catalysed reaction is ATP + H2O + a folded polypeptide = ADP + phosphate + an unfolded polypeptide.. In terms of biological role, together with its co-chaperonin GroES, plays an essential role in assisting protein folding. The GroEL-GroES system forms a nano-cage that allows encapsulation of the non-native substrate proteins and provides a physical environment optimized to promote and accelerate protein folding. This is Chaperonin GroEL, chloroplastic from Gracilaria tenuistipitata var. liui (Red alga).